Reading from the N-terminus, the 529-residue chain is AAA ATPase forming ring-shaped complexes (529 aa).

Positions 15 to 62 (MERQDERLRSLSEANDRLMAKNHALAKALTRATQELTKAKAQLNQLAG) form a coiled coil. An ATP-binding site is contributed by 253–258 (GNGKTL).

Belongs to the AAA ATPase family. Homohexamer. Assembles into a hexameric ring structure.

This Bifidobacterium dentium (strain ATCC 27534 / DSM 20436 / JCM 1195 / Bd1) protein is AAA ATPase forming ring-shaped complexes.